Here is a 228-residue protein sequence, read N- to C-terminus: Ribonuclease H (228 aa).

The region spanning 2-142 (GPMRTIVYAD…ADRLATLGRR (141 aa)) is the RNase H type-1 domain. Residues Asp11, Glu49, Asp71, and Asp134 each contribute to the Mg(2+) site.

It belongs to the RNase H family. As to quaternary structure, monomer. Requires Mg(2+) as cofactor.

It is found in the cytoplasm. The enzyme catalyses Endonucleolytic cleavage to 5'-phosphomonoester.. Functionally, endonuclease that specifically degrades the RNA of RNA-DNA hybrids. This Methylorubrum extorquens (strain PA1) (Methylobacterium extorquens) protein is Ribonuclease H.